The chain runs to 151 residues: Aspartate carbamoyltransferase regulatory chain (151 aa).

Residues Cys108, Cys113, Cys136, and Cys139 each contribute to the Zn(2+) site.

This sequence belongs to the PyrI family. In terms of assembly, contains catalytic and regulatory chains. The cofactor is Zn(2+).

Its function is as follows. Involved in allosteric regulation of aspartate carbamoyltransferase. This is Aspartate carbamoyltransferase regulatory chain from Porphyromonas gingivalis (strain ATCC 33277 / DSM 20709 / CIP 103683 / JCM 12257 / NCTC 11834 / 2561).